Here is a 259-residue protein sequence, read N- to C-terminus: Putative zinc metalloprotease Rip2 (259 aa).

2 helical membrane-spanning segments follow: residues P14 to A34 and P39 to L59. Residue H60 participates in Zn(2+) binding. Residue E61 is part of the active site. Residue H64 participates in Zn(2+) binding. 4 consecutive transmembrane segments (helical) span residues L96 to Y116, I129 to T149, V159 to L179, and L203 to L223.

It belongs to the peptidase M50B family. Zn(2+) is required as a cofactor.

It localises to the cell membrane. This chain is Putative zinc metalloprotease Rip2 (rip2), found in Mycolicibacterium smegmatis (strain ATCC 700084 / mc(2)155) (Mycobacterium smegmatis).